A 950-amino-acid polypeptide reads, in one-letter code: Protein translocase subunit SecA (950 aa).

ATP contacts are provided by residues glutamine 87, 105–109, and aspartate 524; that span reads GEGKT. Positions 908–932 are disordered; it reads GAAPVPAEARNPNDPSTWGKVGRNE. Cysteine 934, cysteine 936, cysteine 945, and histidine 946 together coordinate Zn(2+).

It belongs to the SecA family. In terms of assembly, monomer and homodimer. Part of the essential Sec protein translocation apparatus which comprises SecA, SecYEG and auxiliary proteins SecDF-YajC and YidC. It depends on Zn(2+) as a cofactor.

The protein localises to the cell inner membrane. The protein resides in the cytoplasm. The catalysed reaction is ATP + H2O + cellular proteinSide 1 = ADP + phosphate + cellular proteinSide 2.. Part of the Sec protein translocase complex. Interacts with the SecYEG preprotein conducting channel. Has a central role in coupling the hydrolysis of ATP to the transfer of proteins into and across the cell membrane, serving both as a receptor for the preprotein-SecB complex and as an ATP-driven molecular motor driving the stepwise translocation of polypeptide chains across the membrane. The polypeptide is Protein translocase subunit SecA (Bradyrhizobium sp. (strain BTAi1 / ATCC BAA-1182)).